Reading from the N-terminus, the 291-residue chain is Pantothenate synthetase (291 aa).

An ATP-binding site is contributed by 30–37 (MGNLHEGH). His37 acts as the Proton donor in catalysis. Gln61 is a (R)-pantoate binding site. Gln61 contacts beta-alanine. 149-152 (GEKD) provides a ligand contact to ATP. Gln155 lines the (R)-pantoate pocket. Residues Val178 and 186-189 (MSSR) contribute to the ATP site.

Belongs to the pantothenate synthetase family. Homodimer.

It localises to the cytoplasm. The enzyme catalyses (R)-pantoate + beta-alanine + ATP = (R)-pantothenate + AMP + diphosphate + H(+). Its pathway is cofactor biosynthesis; (R)-pantothenate biosynthesis; (R)-pantothenate from (R)-pantoate and beta-alanine: step 1/1. Functionally, catalyzes the condensation of pantoate with beta-alanine in an ATP-dependent reaction via a pantoyl-adenylate intermediate. The chain is Pantothenate synthetase from Aliivibrio fischeri (strain ATCC 700601 / ES114) (Vibrio fischeri).